A 20-amino-acid chain; its full sequence is Antifungal protein (20 aa).

It belongs to the protease inhibitor I3 (leguminous Kunitz-type inhibitor) family.

In terms of biological role, inhibits soybean trypsin. Has antifungal activity against R.cerealis, A.brassicae and A.niger, and weak antifungal activity against F.oxysporum. The chain is Antifungal protein from Cullen corylifolium (Malaysian scurfpea).